The primary structure comprises 125 residues: Fumarate reductase subunit D (125 aa).

Helical transmembrane passes span 30-50 (FAMI…LGVI), 63-83 (FATS…PMWH), and 105-125 (IACY…IFMI).

It belongs to the FrdD family. Part of an enzyme complex containing four subunits: a flavoprotein (FrdA), an iron-sulfur protein (FrdB), and two hydrophobic anchor proteins (FrdC and FrdD).

Its subcellular location is the cell inner membrane. Its function is as follows. Anchors the catalytic components of the fumarate reductase complex to the cell membrane, binds quinones. This is Fumarate reductase subunit D from Vibrio campbellii (strain ATCC BAA-1116).